The chain runs to 419 residues: Queuine tRNA-ribosyltransferase accessory subunit 2 (419 aa).

Zn(2+) is bound by residues Cys-326, Cys-328, Cys-331, and His-357.

This sequence belongs to the queuine tRNA-ribosyltransferase family. QTRT2 subfamily. Heterodimer of a catalytic subunit and an accessory subunit. Zn(2+) is required as a cofactor.

The protein localises to the cytoplasm. Its function is as follows. Non-catalytic subunit of the queuine tRNA-ribosyltransferase (TGT) that catalyzes the base-exchange of a guanine (G) residue with queuine (Q) at position 34 (anticodon wobble position) in tRNAs with GU(N) anticodons (tRNA-Asp, -Asn, -His and -Tyr), resulting in the hypermodified nucleoside queuosine (7-(((4,5-cis-dihydroxy-2-cyclopenten-1-yl)amino)methyl)-7-deazaguanosine). This Drosophila grimshawi (Hawaiian fruit fly) protein is Queuine tRNA-ribosyltransferase accessory subunit 2.